The following is a 238-amino-acid chain: Ribonuclease PH (238 aa).

Phosphate is bound by residues Arg-86 and 124-126 (GTR).

It belongs to the RNase PH family. In terms of assembly, homohexameric ring arranged as a trimer of dimers.

It catalyses the reaction tRNA(n+1) + phosphate = tRNA(n) + a ribonucleoside 5'-diphosphate. Functionally, phosphorolytic 3'-5' exoribonuclease that plays an important role in tRNA 3'-end maturation. Removes nucleotide residues following the 3'-CCA terminus of tRNAs; can also add nucleotides to the ends of RNA molecules by using nucleoside diphosphates as substrates, but this may not be physiologically important. Probably plays a role in initiation of 16S rRNA degradation (leading to ribosome degradation) during starvation. The sequence is that of Ribonuclease PH from Aliivibrio fischeri (strain ATCC 700601 / ES114) (Vibrio fischeri).